The primary structure comprises 77 residues: MIPLVKTFLVVSSGKVSSRKLKRSWGGAKRLNVPVPVLSGLNSPSSMILLHRSRYCSSSLFFPSIVILYRSVMKLSP.

This is an uncharacterized protein from Saccharomyces cerevisiae (strain ATCC 204508 / S288c) (Baker's yeast).